The chain runs to 65 residues: Large ribosomal subunit protein bL32 (65 aa).

The span at 1–19 shows a compositional bias: basic residues; it reads MAVQKSRKTPSKRGMRRSH. The segment at 1 to 32 is disordered; it reads MAVQKSRKTPSKRGMRRSHNALTNPTLSEDQE.

It belongs to the bacterial ribosomal protein bL32 family.

This Ruthia magnifica subsp. Calyptogena magnifica protein is Large ribosomal subunit protein bL32.